Reading from the N-terminus, the 210-residue chain is Thymidylate kinase (210 aa).

16–23 (GGDGVGKS) contacts ATP.

Belongs to the thymidylate kinase family.

The enzyme catalyses dTMP + ATP = dTDP + ADP. Phosphorylation of dTMP to form dTDP in both de novo and salvage pathways of dTTP synthesis. The sequence is that of Thymidylate kinase from Leifsonia xyli subsp. xyli (strain CTCB07).